Reading from the N-terminus, the 348-residue chain is NADH-ubiquinone oxidoreductase chain 2 (348 aa).

Transmembrane regions (helical) follow at residues 1–21 (MMTL…MFSS), 23–43 (WFFA…MMLF), 56–76 (YFIS…WNYF), 92–112 (ITLI…HFWL), 123–143 (MGLI…IQVS), 148–168 (NMYI…FGGL), 176–196 (LLAY…AVSA), 198–218 (LSWV…TILI), 242–262 (CILV…FLKL), 272–292 (SLIL…FFYL), and 321–341 (LLFN…PFMI).

This sequence belongs to the complex I subunit 2 family.

Its subcellular location is the mitochondrion inner membrane. It carries out the reaction a ubiquinone + NADH + 5 H(+)(in) = a ubiquinol + NAD(+) + 4 H(+)(out). Its function is as follows. Core subunit of the mitochondrial membrane respiratory chain NADH dehydrogenase (Complex I) that is believed to belong to the minimal assembly required for catalysis. Complex I functions in the transfer of electrons from NADH to the respiratory chain. The immediate electron acceptor for the enzyme is believed to be ubiquinone. In Myxine glutinosa (Atlantic hagfish), this protein is NADH-ubiquinone oxidoreductase chain 2 (MT-ND2).